The chain runs to 634 residues: DNA gyrase subunit B (634 aa).

Residues 416–530 (REIYIVEGDS…NGYIYIAMPP (115 aa)) form the Toprim domain. Residues Glu-422, Asp-495, and Asp-497 each coordinate Mg(2+).

Belongs to the type II topoisomerase GyrB family. Heterotetramer, composed of two GyrA and two GyrB chains. In the heterotetramer, GyrA contains the active site tyrosine that forms a transient covalent intermediate with DNA, while GyrB binds cofactors and catalyzes ATP hydrolysis. Mg(2+) serves as cofactor. The cofactor is Mn(2+). Ca(2+) is required as a cofactor.

It is found in the cytoplasm. The enzyme catalyses ATP-dependent breakage, passage and rejoining of double-stranded DNA.. A type II topoisomerase that negatively supercoils closed circular double-stranded (ds) DNA in an ATP-dependent manner to modulate DNA topology and maintain chromosomes in an underwound state. Negative supercoiling favors strand separation, and DNA replication, transcription, recombination and repair, all of which involve strand separation. Also able to catalyze the interconversion of other topological isomers of dsDNA rings, including catenanes and knotted rings. Type II topoisomerases break and join 2 DNA strands simultaneously in an ATP-dependent manner. The chain is DNA gyrase subunit B from Borreliella burgdorferi (strain ATCC 35210 / DSM 4680 / CIP 102532 / B31) (Borrelia burgdorferi).